The chain runs to 160 residues: Nucleotide-binding protein Patl_4311 (160 aa).

This sequence belongs to the YajQ family.

Nucleotide-binding protein. The polypeptide is Nucleotide-binding protein Patl_4311 (Pseudoalteromonas atlantica (strain T6c / ATCC BAA-1087)).